A 463-amino-acid polypeptide reads, in one-letter code: tRNA-splicing endonuclease subunit Sen2 (463 aa).

2 positions are modified to phosphoserine: S32 and S147. The segment at 120–213 is disordered; the sequence is HDESTVQKIL…VASPSSLNGH (94 aa). Composition is skewed to basic and acidic residues over residues 139 to 149 and 159 to 170; these read PYRERKGESPQ and SSLEGREGKDEL. Active-site residues include Y367 and H375. Phosphoserine occurs at positions 406, 409, and 413. The active site involves K414.

It belongs to the tRNA-intron endonuclease family. TRNA splicing endonuclease is a heterotetramer composed of TSEN2, TSEN15, TSEN34/LENG5 and TSEN54. tRNA splicing endonuclease complex also contains proteins of the pre-mRNA 3'-end processing machinery such as CLP1, CPSF1, CPSF4 and CSTF2.

The protein resides in the nucleus. It localises to the nucleolus. The enzyme catalyses pretRNA = a 3'-half-tRNA molecule with a 5'-OH end + a 5'-half-tRNA molecule with a 2',3'-cyclic phosphate end + an intron with a 2',3'-cyclic phosphate and a 5'-hydroxyl terminus.. Functionally, constitutes one of the two catalytic subunit of the tRNA-splicing endonuclease complex, a complex responsible for identification and cleavage of the splice sites in pre-tRNA. It cleaves pre-tRNA at the 5'- and 3'-splice sites to release the intron. The products are an intron and two tRNA half-molecules bearing 2',3'-cyclic phosphate and 5'-OH termini. There are no conserved sequences at the splice sites, but the intron is invariably located at the same site in the gene, placing the splice sites an invariant distance from the constant structural features of the tRNA body. Probably carries the active site for 5'-splice site cleavage. The tRNA splicing endonuclease is also involved in mRNA processing via its association with pre-mRNA 3'-end processing factors, establishing a link between pre-tRNA splicing and pre-mRNA 3'-end formation, suggesting that the endonuclease subunits function in multiple RNA-processing events. This chain is tRNA-splicing endonuclease subunit Sen2 (Tsen2), found in Rattus norvegicus (Rat).